The following is a 184-amino-acid chain: Adenine phosphoribosyltransferase (184 aa).

The protein belongs to the purine/pyrimidine phosphoribosyltransferase family. In terms of assembly, homodimer.

The protein localises to the cytoplasm. It carries out the reaction AMP + diphosphate = 5-phospho-alpha-D-ribose 1-diphosphate + adenine. Its pathway is purine metabolism; AMP biosynthesis via salvage pathway; AMP from adenine: step 1/1. Functionally, catalyzes a salvage reaction resulting in the formation of AMP, that is energically less costly than de novo synthesis. The protein is Adenine phosphoribosyltransferase of Mycobacterium marinum (strain ATCC BAA-535 / M).